Consider the following 191-residue polypeptide: Putative glutathione-dependent formaldehyde-activating enzyme (191 aa).

The CENP-V/GFA domain occupies 20–166 (FSGGTLRCHC…FKSVGLETYD (147 aa)). Zn(2+) contacts are provided by Cys27, Cys29, Cys48, Cys50, Cys53, Cys95, and Cys98.

It belongs to the Gfa family. Requires Zn(2+) as cofactor.

It catalyses the reaction S-(hydroxymethyl)glutathione = glutathione + formaldehyde. It participates in one-carbon metabolism; formaldehyde degradation; formate from formaldehyde (glutathione route): step 1/3. Catalyzes the condensation of formaldehyde and glutathione to S-hydroxymethylglutathione. This Colletotrichum graminicola (strain M1.001 / M2 / FGSC 10212) (Maize anthracnose fungus) protein is Putative glutathione-dependent formaldehyde-activating enzyme.